The chain runs to 535 residues: GMP synthase [glutamine-hydrolyzing] (535 aa).

One can recognise a Glutamine amidotransferase type-1 domain in the interval 24–217; the sequence is KILIVDFGSQ…VRKVAGLTGD (194 aa). The active-site Nucleophile is C101. Residues H191 and E193 contribute to the active site. In terms of domain architecture, GMPS ATP-PPase spans 218–410; it reads WTMRAFREEA…LGLPEIFVGR (193 aa). Residue 245 to 251 coordinates ATP; it reads SGGVDSS.

In terms of assembly, homodimer.

The enzyme catalyses XMP + L-glutamine + ATP + H2O = GMP + L-glutamate + AMP + diphosphate + 2 H(+). It functions in the pathway purine metabolism; GMP biosynthesis; GMP from XMP (L-Gln route): step 1/1. Functionally, catalyzes the synthesis of GMP from XMP. This chain is GMP synthase [glutamine-hydrolyzing], found in Nitrobacter winogradskyi (strain ATCC 25391 / DSM 10237 / CIP 104748 / NCIMB 11846 / Nb-255).